We begin with the raw amino-acid sequence, 1374 residues long: Sterol 3-beta-glucosyltransferase (1374 aa).

Basic and acidic residues predominate over residues 1 to 14 (MRPLRDDAKRRADR). Disordered stretches follow at residues 1–60 (MRPL…RDGN), 83–190 (ARFD…PRAA), and 206–227 (TSAT…QPQS). Over residues 16 to 28 (LSASMKPTSSNRP) the composition is skewed to polar residues. Residues 29 to 41 (FSDRVPDRFKDGD) show a composition bias toward basic and acidic residues. Residues 101 to 112 (VEQTTGKASSRT) are compositionally biased toward polar residues. Positions 125–138 (KRSEPSKLVLEERG) are enriched in basic and acidic residues. A GRAM 1 domain is found at 234–283 (MRLMKMFEFAKPEKVLVEYACSLLQSMLLQGYMYVTEGHICFYAYLPKKS). A PH domain is found at 285–382 (VAIKSGYLSK…WVKALQQVIF (98 aa)). The tract at residues 458 to 538 (ATKEAQDQHD…SMTDTTESAS (81 aa)) is disordered. Composition is skewed to basic and acidic residues over residues 461 to 473 (EAQD…HQPE) and 490 to 499 (SDQRREDSPR). Over residues 503 to 538 (SSVGNENQGSADSFAEQGTGSSPIIQSMTDTTESAS) the composition is skewed to polar residues. The 67-residue stretch at 704-770 (DRFRAHFALP…KDIENVEKEK (67 aa)) folds into the GRAM 2 domain. Serine 893, arginine 894, aspartate 896, alanine 1196, histidine 1198, histidine 1211, glycine 1215, threonine 1216, aspartate 1235, and glutamine 1236 together coordinate UDP-alpha-D-glucose. The span at 1314–1325 (ASSTPFSPTPTA) shows a compositional bias: polar residues. A disordered region spans residues 1314 to 1338 (ASSTPFSPTPTAKASPDGGDDDLDD).

The protein belongs to the glycosyltransferase 28 family.

It is found in the cytoplasm. Its subcellular location is the preautophagosomal structure membrane. It catalyses the reaction a sterol + UDP-alpha-D-glucose = a sterol 3-beta-D-glucoside + UDP + H(+). It carries out the reaction ergosterol + UDP-alpha-D-glucose = ergosteryl 3-beta-D-glucoside + UDP + H(+). Functionally, sterol glycosyltransferase responsible for the glycosylation of ergosterol to form ergosterol-glucoside. The sequence is that of Sterol 3-beta-glucosyltransferase from Penicillium rubens (strain ATCC 28089 / DSM 1075 / NRRL 1951 / Wisconsin 54-1255) (Penicillium chrysogenum).